The chain runs to 637 residues: Neuroendocrine convertase 2 (637 aa).

A signal peptide spans 1–24 (MEGGCGSQWKAAGLLFCVMVFASA). The propeptide occupies 25–108 (ERPVFTNHFL…QQEGFDRKKR (84 aa)). The 325-residue stretch at 128–452 (QWYLFNTGQA…YGVLDAGAMV (325 aa)) folds into the Peptidase S8 domain. Catalysis depends on charge relay system residues Asp166 and His207. 2 disulfides stabilise this stretch: Cys224-Cys375 and Cys316-Cys346. N-linked (GlcNAc...) asparagine glycosylation is present at Asn374. Ser383 serves as the catalytic Charge relay system. Residues 460 to 596 (TVPERFHCVG…TLMLHGTQSA (137 aa)) enclose the P/Homo B domain. Cys467 and Cys493 form a disulfide bridge. N-linked (GlcNAc...) asparagine glycans are attached at residues Asn513 and Asn523.

This sequence belongs to the peptidase S8 family. Furin subfamily.

The protein localises to the cytoplasmic vesicle. The protein resides in the secretory vesicle. It localises to the secreted. It catalyses the reaction Release of protein hormones and neuropeptides from their precursors, generally by hydrolysis of -Lys-Arg-|- bonds.. In terms of biological role, serine endopeptidase which is involved in the processing of hormone and other protein precursors at sites comprised of pairs of basic amino acid residues. Responsible for the release of glucagon from proglucagon in pancreatic A cells. The polypeptide is Neuroendocrine convertase 2 (Pcsk2) (Rattus norvegicus (Rat)).